We begin with the raw amino-acid sequence, 73 residues long: Omega-hexatoxin-Ar1b (73 aa).

The signal sequence occupies residues 1–22 (MNTATGFIVLLVLATVLGCIEA). Positions 23 to 37 (GESHVREDAMGRARR) are excised as a propeptide. 3 disulfides stabilise this stretch: Cys40-Cys54, Cys47-Cys58, and Cys53-Cys72.

This sequence belongs to the neurotoxin 08 (Shiva) family. 01 (omega toxin) subfamily. In terms of tissue distribution, expressed by the venom gland.

The protein localises to the secreted. Its function is as follows. Insecticidal toxin that reversibly and voltage-independently blocks both mid-low- (M-LVA) and high-voltage-activated (HVA) calcium channels (Cav) in cockroach DUM neurons. Also causes a modest block of insect sodium channel currents (Nav). Induces potent excitatory symptoms, followed by flaccid paralysis leading to death in house crickets. The chain is Omega-hexatoxin-Ar1b from Atrax robustus (Sydney funnel-web spider).